We begin with the raw amino-acid sequence, 132 residues long: Small ribosomal subunit protein uS8 (132 aa).

Belongs to the universal ribosomal protein uS8 family. As to quaternary structure, part of the 30S ribosomal subunit. Contacts proteins S5 and S12.

One of the primary rRNA binding proteins, it binds directly to 16S rRNA central domain where it helps coordinate assembly of the platform of the 30S subunit. The protein is Small ribosomal subunit protein uS8 of Methylocella silvestris (strain DSM 15510 / CIP 108128 / LMG 27833 / NCIMB 13906 / BL2).